Here is a 258-residue protein sequence, read N- to C-terminus: Acyl-[acyl-carrier-protein]--UDP-N-acetylglucosamine O-acyltransferase (258 aa).

Belongs to the transferase hexapeptide repeat family. LpxA subfamily. Homotrimer.

It localises to the cytoplasm. It carries out the reaction a (3R)-hydroxyacyl-[ACP] + UDP-N-acetyl-alpha-D-glucosamine = a UDP-3-O-[(3R)-3-hydroxyacyl]-N-acetyl-alpha-D-glucosamine + holo-[ACP]. Its pathway is glycolipid biosynthesis; lipid IV(A) biosynthesis; lipid IV(A) from (3R)-3-hydroxytetradecanoyl-[acyl-carrier-protein] and UDP-N-acetyl-alpha-D-glucosamine: step 1/6. In terms of biological role, involved in the biosynthesis of lipid A, a phosphorylated glycolipid that anchors the lipopolysaccharide to the outer membrane of the cell. This Pseudomonas syringae pv. tomato (strain ATCC BAA-871 / DC3000) protein is Acyl-[acyl-carrier-protein]--UDP-N-acetylglucosamine O-acyltransferase.